The sequence spans 129 residues: DNA base-flipping protein (129 aa).

Belongs to the MGMT family. ATL subfamily. Interacts with HelD and UvrA.

Its function is as follows. Involved in DNA damage recognition. Binds DNA containing O(6)-methylguanine and larger O(6)-alkylguanine adducts, and to double-stranded DNA that contains an AP (apurinic/apyrimidinic) site. Binds to the damaged base and flips the base out of the DNA duplex into an extrahelical conformation, which allows processing by repair proteins. Works in partnership with the nucleotide excision repair (NER) pathway to enhance the repair of the O(6)-alkylguanine adducts larger than the methyl adduct. Also prevents methyl-directed mismatch repair (MMR)-mediated attack of the O(6)-alkylguanine:T mispairs for the larger alkyl groups. This is DNA base-flipping protein from Escherichia coli (strain K12).